A 308-amino-acid polypeptide reads, in one-letter code: L-lactate dehydrogenase 2 (308 aa).

Residues Val14, Asp35, Tyr65, and 79-80 (GA) each bind NAD(+). Arg88 contacts substrate. Ser101 is an NAD(+) binding site. Position 120 to 123 (120 to 123 (NPVD)) interacts with substrate. Thr143 lines the NAD(+) pocket. A substrate-binding site is contributed by 148–151 (DTAR). His175 functions as the Proton acceptor in the catalytic mechanism. Residue Thr225 coordinates substrate.

Belongs to the LDH/MDH superfamily. LDH family. As to quaternary structure, homotetramer.

It localises to the cytoplasm. It carries out the reaction (S)-lactate + NAD(+) = pyruvate + NADH + H(+). The protein operates within fermentation; pyruvate fermentation to lactate; (S)-lactate from pyruvate: step 1/1. Its function is as follows. Catalyzes the conversion of lactate to pyruvate. The sequence is that of L-lactate dehydrogenase 2 from Lactobacillus johnsonii (strain CNCM I-12250 / La1 / NCC 533).